The following is a 166-amino-acid chain: Deglycase PH1704 (166 aa).

The PfpI endopeptidase domain occupies 1–166; that stretch reads MKVLFLTANE…WMREFVKLLK (166 aa). Catalysis depends on Cys-100, which acts as the Nucleophile. His-101 is a catalytic residue.

Belongs to the peptidase C56 family. As to quaternary structure, homohexamer formed by a dimer of trimers that assemble into a hollow ring structure.

It is found in the cytoplasm. It catalyses the reaction N(omega)-(1-hydroxy-2-oxopropyl)-L-arginyl-[protein] + H2O = lactate + L-arginyl-[protein] + H(+). The catalysed reaction is N(6)-(1-hydroxy-2-oxopropyl)-L-lysyl-[protein] + H2O = lactate + L-lysyl-[protein] + H(+). It carries out the reaction S-(1-hydroxy-2-oxopropyl)-L-cysteinyl-[protein] + H2O = lactate + L-cysteinyl-[protein] + H(+). The enzyme catalyses N(omega)-(1-hydroxy-2-oxoethyl)-L-arginyl-[protein] + H2O = L-arginyl-[protein] + glycolate + H(+). It catalyses the reaction N(6)-(1-hydroxy-2-oxoethyl)-L-lysyl-[protein] + H2O = glycolate + L-lysyl-[protein] + H(+). The catalysed reaction is S-(1-hydroxy-2-oxoethyl)-L-cysteinyl-[protein] + H2O = glycolate + L-cysteinyl-[protein] + H(+). Functionally, deglycase that catalyzes the deglycation of the Maillard adducts formed between amino groups of proteins and reactive carbonyl groups of glyoxals. Thus, functions as a protein deglycase that repairs methylglyoxal- and glyoxal-glycated proteins, and releases repaired proteins and lactate or glycolate, respectively. Deglycates cysteine, arginine and lysine residues in proteins, and thus reactivates these proteins by reversing glycation by glyoxals. Acts on early glycation intermediates (hemithioacetals and aminocarbinols), preventing the formation of advanced glycation endproducts (AGE) that cause irreversible damage. Also displays proteolytic activity. The chain is Deglycase PH1704 from Pyrococcus horikoshii (strain ATCC 700860 / DSM 12428 / JCM 9974 / NBRC 100139 / OT-3).